Reading from the N-terminus, the 401-residue chain is Inactive leucine-rich repeat receptor-like protein kinase CORYNE (401 aa).

Positions 1–33 (MKQRRRRNGCSSSNTISLLLLFFLVFFSRTSTS) are cleaved as a signal peptide. Over 34-62 (TSCRRRTVKHLSTTSTSSTPLESRITSKV) the chain is Extracellular. The chain crosses the membrane as a helical span at residues 63–83 (IVISIVSGILTGLVSALVLAF). Residues 84-401 (LVRSIVKFMK…VHMLTQLHSF (318 aa)) are Cytoplasmic-facing. The Protein kinase domain maps to 118-401 (SNGIQLLGSD…VHMLTQLHSF (284 aa)). ATP contacts are provided by residues 124 to 132 (LGSDLNGKY) and Lys146.

It belongs to the protein kinase superfamily. Ser/Thr protein kinase family. As to quaternary structure, self-interacts. Parts of a tetrameric complex made of two CLV2/CRN heterodimers that can interact with CLV3 and CLE peptides. CLV2/CRN heterodimer interacts with CLV1 homodimers. Interacts with CLV1 and CLV2. CLV2/CRN heterodimer can interact with BAM3. As to expression, present in roots, stems, leaves, inflorescence, flowers and siliques. Mostly expressed in shoot tips and, to a lesser extent, in young organs and roots. Also expressed in the inner tissues of the proximal root meristem. Expressed in the vascular cylinder of root tips, mostly in phloem poles.

It is found in the cell membrane. The protein localises to the endoplasmic reticulum membrane. In terms of biological role, involved in the perception of CLV3 and CLV3-like (CLE) peptides, that act as extracellular signals regulating meristem maintenance. Modulates root, shoot and flower apical meristem maintenance and floral organ development regulation, probably via CLAVATA (CLV)-like pathways involving at least CLV3 and CLE19. In complex with CLV2, perceives secreted CLV3-like effector proteins from plant-parasitic cyst nematodes as ligand mimics of the plant CLE signaling pathway. This recognition is required for proper feeding structure (syncytium) development and ultimately successful nematode infection. CLE14 perception by CLV2/CRN complex triggers root meristem differentiation. Required for the sensing of the root CLE peptides (e.g. CLE8, CLE9/CLE10, CLE11, CLE13, CLE14, CLE16, CLE17, CLE18, CLE20, CLE21, CLE25, CLE26, CLE40, CLE41/CLE44 and CLE45), which also involves CLV2 and leads to root growth regulation, mostly in the phloem and protophloem. Promotes the accumulation of BAM3, especially at later stages of protophloem development. This chain is Inactive leucine-rich repeat receptor-like protein kinase CORYNE, found in Arabidopsis thaliana (Mouse-ear cress).